The following is a 173-amino-acid chain: Translation initiation factor IF-3 (173 aa).

It belongs to the IF-3 family. As to quaternary structure, monomer.

The protein resides in the cytoplasm. IF-3 binds to the 30S ribosomal subunit and shifts the equilibrium between 70S ribosomes and their 50S and 30S subunits in favor of the free subunits, thus enhancing the availability of 30S subunits on which protein synthesis initiation begins. This is Translation initiation factor IF-3 from Neisseria gonorrhoeae (strain ATCC 700825 / FA 1090).